A 264-amino-acid chain; its full sequence is 3-methyl-2-oxobutanoate hydroxymethyltransferase (264 aa).

2 residues coordinate Mg(2+): Asp45 and Asp84. Residues 45–46 (DS), Asp84, and Lys112 each bind 3-methyl-2-oxobutanoate. Glu114 contacts Mg(2+). Glu181 (proton acceptor) is an active-site residue.

The protein belongs to the PanB family. Homodecamer; pentamer of dimers. Mg(2+) is required as a cofactor.

It is found in the cytoplasm. The enzyme catalyses 3-methyl-2-oxobutanoate + (6R)-5,10-methylene-5,6,7,8-tetrahydrofolate + H2O = 2-dehydropantoate + (6S)-5,6,7,8-tetrahydrofolate. The protein operates within cofactor biosynthesis; (R)-pantothenate biosynthesis; (R)-pantoate from 3-methyl-2-oxobutanoate: step 1/2. In terms of biological role, catalyzes the reversible reaction in which hydroxymethyl group from 5,10-methylenetetrahydrofolate is transferred onto alpha-ketoisovalerate to form ketopantoate. The protein is 3-methyl-2-oxobutanoate hydroxymethyltransferase of Shewanella sp. (strain ANA-3).